The chain runs to 1406 residues: Receptor-type tyrosine-protein phosphatase eta (1406 aa).

Positions M1–C24 are cleaved as a signal peptide. Topologically, residues T25–G1044 are extracellular. N-linked (GlcNAc...) asparagine glycans are attached at residues N36, N52, N97, N103, N118, N124, N186, N192, N243, N275, N281, N296, N302, N331, N332, N364, N385, N391, N453, N459, N484, N500, N510, N547, N568, N630, N636, N651, N657, N719, N745, N750, N766, N776, N804, and N828. Residues E39–S72 form a disordered region. Polar residues predominate over residues M41–R58. Fibronectin type-III domains lie at A82 to S170, P171 to S259, P260 to L343, K346 to S437, P438 to T523, K524 to R614, A615 to S703, M704 to S793, V794 to P888, and P887 to V979. Residue N1010 is glycosylated (N-linked (GlcNAc...) asparagine). Residues A1045–W1065 form a helical membrane-spanning segment. Residues R1066–A1406 are Cytoplasmic-facing. Positions F1110–I1367 constitute a Tyrosine-protein phosphatase domain. Substrate is bound by residues D1274, C1308–R1314, and Q1352. The Phosphocysteine intermediate role is filled by C1308.

This sequence belongs to the protein-tyrosine phosphatase family. Receptor class 3 subfamily. In terms of tissue distribution, found on the apical surfaces of retinal Mueller cells, renal tubule cells and intestinal brush border cells.

The protein resides in the cell membrane. It is found in the cell projection. The protein localises to the ruffle membrane. Its subcellular location is the cell junction. The catalysed reaction is O-phospho-L-tyrosyl-[protein] + H2O = L-tyrosyl-[protein] + phosphate. Functionally, tyrosine phosphatase which dephosphorylates or contributes to the dephosphorylation of several substrates. Plays a role in cell adhesion, migration, proliferation and differentiation. Has a role in megakaryocytes and platelet formation. May influence the potential of nonsensory supporting cells to either proliferate or differentiate into hair cells. The sequence is that of Receptor-type tyrosine-protein phosphatase eta (PTPRJ) from Gallus gallus (Chicken).